The chain runs to 636 residues: Alpha-L-iduronidase (636 aa).

The N-terminal stretch at 1–16 (MLSLLLVLTTLARIHA) is a signal peptide. Alpha-D-mannopyranose-binding residues include Pro-39, Ile-43, and His-45. Alpha-L-iduronate is bound by residues His-78, Asn-169, and Glu-170. Catalysis depends on Glu-170, which acts as the Proton donor. The N-linked (GlcNAc...) asparagine glycan is linked to Asn-180. Lys-257 contacts alpha-L-iduronate. A glycan (N-linked (GlcNAc...) asparagine) is linked at Asn-268. Alpha-L-iduronate-binding residues include Glu-293 and Gly-299. Glu-293 acts as the Nucleophile in catalysis. Trp-300 contacts alpha-D-mannopyranose. Residues Asp-342 and Arg-356 each contribute to the alpha-L-iduronate site. Asn-365, Asn-448, Asn-453, and Asn-483 each carry an N-linked (GlcNAc...) asparagine glycan. Cys-529 and Cys-565 form a disulfide bridge. A glycan (N-linked (GlcNAc...) asparagine) is linked at Asn-622.

The protein belongs to the glycosyl hydrolase 39 family.

The protein resides in the lysosome. It carries out the reaction Hydrolysis of unsulfated alpha-L-iduronosidic linkages in dermatan sulfate.. Its function is as follows. Essential lysosomal hydrolase responsible for the degradation of glycosaminoglycans (GAG) such as heparan sulfate. Required for lysosome function and autophagy. Consequently, has an essential role in the development, maintenance and function of various cells, tissues, and organs, including the muscles and the central nervous system (CNS). The protein is Alpha-L-iduronidase of Drosophila melanogaster (Fruit fly).